The sequence spans 296 residues: Nucleotide-binding protein SPCG_1551 (296 aa).

13–20 serves as a coordination point for ATP; sequence GMSGAGKT. 63-66 lines the GTP pocket; the sequence is DMRS.

This sequence belongs to the RapZ-like family.

In terms of biological role, displays ATPase and GTPase activities. This chain is Nucleotide-binding protein SPCG_1551, found in Streptococcus pneumoniae (strain CGSP14).